Consider the following 236-residue polypeptide: Small ribosomal subunit protein uS3 (236 aa).

Residues valine 39–arginine 107 enclose the KH type-2 domain.

This sequence belongs to the universal ribosomal protein uS3 family. Part of the 30S ribosomal subunit. Forms a tight complex with proteins S10 and S14.

Functionally, binds the lower part of the 30S subunit head. Binds mRNA in the 70S ribosome, positioning it for translation. This chain is Small ribosomal subunit protein uS3, found in Blochmanniella pennsylvanica (strain BPEN).